A 228-amino-acid polypeptide reads, in one-letter code: Methylthioribulose-1-phosphate dehydratase (228 aa).

A substrate-binding site is contributed by C92. Zn(2+)-binding residues include H110 and H112. The Proton donor/acceptor role is filled by E135. Residue H192 participates in Zn(2+) binding.

It belongs to the aldolase class II family. MtnB subfamily. The cofactor is Zn(2+).

The protein resides in the cytoplasm. The protein localises to the nucleus. The catalysed reaction is 5-(methylsulfanyl)-D-ribulose 1-phosphate = 5-methylsulfanyl-2,3-dioxopentyl phosphate + H2O. Its pathway is amino-acid biosynthesis; L-methionine biosynthesis via salvage pathway; L-methionine from S-methyl-5-thio-alpha-D-ribose 1-phosphate: step 2/6. Its function is as follows. Catalyzes the dehydration of methylthioribulose-1-phosphate (MTRu-1-P) into 2,3-diketo-5-methylthiopentyl-1-phosphate (DK-MTP-1-P). The protein is Methylthioribulose-1-phosphate dehydratase of Schizosaccharomyces pombe (strain 972 / ATCC 24843) (Fission yeast).